The following is a 151-amino-acid chain: Protein-export protein SecB (151 aa).

It belongs to the SecB family. In terms of assembly, homotetramer, a dimer of dimers. One homotetramer interacts with 1 SecA dimer.

It is found in the cytoplasm. Its function is as follows. One of the proteins required for the normal export of preproteins out of the cell cytoplasm. It is a molecular chaperone that binds to a subset of precursor proteins, maintaining them in a translocation-competent state. It also specifically binds to its receptor SecA. This is Protein-export protein SecB from Acinetobacter baylyi (strain ATCC 33305 / BD413 / ADP1).